Consider the following 169-residue polypeptide: MAEENQTPATATEEQQAVLQIQRIYVKDISFEAPNLPHVFQQEWKPKLNFDLSTEAKQLGEDLYEVVLNISVETTLEDSGDLAFLCEVKQAGVFTISGLEDMQMAHCLTSQCPNMLFPYARELVSNLVNRGTFPALNLSPVNFDALFMEFLQRQEQESQNAESSTEVQH.

It belongs to the SecB family. In terms of assembly, homotetramer, a dimer of dimers. One homotetramer interacts with 1 SecA dimer.

It is found in the cytoplasm. Its function is as follows. One of the proteins required for the normal export of preproteins out of the cell cytoplasm. It is a molecular chaperone that binds to a subset of precursor proteins, maintaining them in a translocation-competent state. It also specifically binds to its receptor SecA. The sequence is that of Protein-export protein SecB from Mannheimia succiniciproducens (strain KCTC 0769BP / MBEL55E).